We begin with the raw amino-acid sequence, 304 residues long: Myelin basic protein (304 aa).

2 stretches are compositionally biased toward basic and acidic residues: residues 1-12 (MGNHAGKRELNA) and 22-32 (NRGESEKKRNL). A disordered region spans residues 1 to 146 (MGNHAGKREL…QKRPSQRHGS (146 aa)). Gly-2 carries the N-acetylalanine modification. Residues 51 to 65 (ANQNNGTSSQDTAVT) are compositionally biased toward polar residues. The span at 95–113 (FSRDAPGREDNTFKDRPSE) shows a compositional bias: basic and acidic residues. Position 96 is a phosphoserine (Ser-96). A compositionally biased stretch (polar residues) spans 117-130 (LQTIQEDSAATSES). 2 positions are modified to phosphoserine: Ser-141 and Ser-146. Residue Tyr-148 is modified to Phosphotyrosine. A Phosphothreonine modification is found at Thr-151. A Phosphoserine modification is found at Ser-153. Phosphothreonine is present on Thr-154. 2 positions are modified to citrulline; in form C8: Arg-159 and Arg-165. Residue Arg-167 is modified to Citrulline. Phosphothreonine is present on Thr-169. At Ser-174 the chain carries Phosphoserine. 2 positions are modified to omega-N-methylarginine: Arg-177 and Arg-183. Residues 179 to 222 (FGGDRGAPKRGSGKDSHHPARTAHYGSLPQKSHGRTQDENPVVH) form an induces experimental autoimmune encephalomyelitis (EAE) 1 region. Residues 180 to 249 (GGDRGAPKRG…GRGLSLSRFS (70 aa)) are disordered. At Ser-190 the chain carries Phosphoserine. Residue Arg-199 is modified to Citrulline. Tyr-203 bears the Phosphotyrosine mark. Ser-210 carries the phosphoserine modification. 2 positions are modified to phosphothreonine: Thr-214 and Thr-229. The residue at position 231 (Arg-231) is a Citrulline. Position 232 is a phosphothreonine (Thr-232). The residue at position 237 (Gln-237) is a Deamidated glutamine. Position 241 is an omega-N-methylarginine; alternate (Arg-241). A Symmetric dimethylarginine; alternate modification is found at Arg-241. Residues 246–256 (SRFSWGAEGQR) form an induces experimental autoimmune encephalomyelitis (EAE) 2 region. At Ser-249 the chain carries Phosphoserine. Arg-256 and Arg-264 each carry citrulline; in form C8. Gln-281 is modified (deamidated glutamine). Arg-293 carries the post-translational modification Citrulline; in form C8. Ser-295 is modified (phosphoserine). Arg-296 bears the Citrulline mark. Phosphoserine; by UHMK1 is present on Ser-299. Arg-303 carries the citrulline modification. Arg-304 carries the citrulline; in form C8 modification.

Belongs to the myelin basic protein family. In terms of assembly, homodimer. Isoform 3 exists as a homodimer. Several charge isomers of MBP; C1 (the most cationic, least modified, and most abundant form), C2, C3, C4, C5, C6, C7, C8-A and C8-B (the least cationic form); are produced as a result of optional PTM, such as phosphorylation, deamidation of glutamine or asparagine, arginine citrullination and methylation. C8-A and C8-B contain each two mass isoforms termed C8-A(H), C8-A(L), C8-B(H) and C8-B(L), (H) standing for higher and (L) for lower molecular weight. C3, C4 and C5 are phosphorylated. The ratio of methylated arginine residues decreases during aging, making the protein more cationic. Post-translationally, the N-terminal alanine is acetylated (isoform 3, isoform 4, isoform 5 and isoform 6). In terms of processing, arg-241 was found to be 6% monomethylated and 60% symmetrically dimethylated. Proteolytically cleaved in B cell lysosomes by cathepsin CTSG which degrades the major immunogenic MBP epitope and prevents the activation of MBP-specific autoreactive T cells. Post-translationally, phosphorylated by TAOK2, VRK2, MAPK11, MAPK12, MAPK14 and MINK1. MBP isoforms are found in both the central and the peripheral nervous system, whereas Golli-MBP isoforms are expressed in fetal thymus, spleen and spinal cord, as well as in cell lines derived from the immune system.

It localises to the myelin membrane. It is found in the nucleus. The classic group of MBP isoforms (isoform 4-isoform 14) are with PLP the most abundant protein components of the myelin membrane in the CNS. They have a role in both its formation and stabilization. The smaller isoforms might have an important role in remyelination of denuded axons in multiple sclerosis. The non-classic group of MBP isoforms (isoform 1-isoform 3/Golli-MBPs) may preferentially have a role in the early developing brain long before myelination, maybe as components of transcriptional complexes, and may also be involved in signaling pathways in T-cells and neural cells. Differential splicing events combined with optional post-translational modifications give a wide spectrum of isomers, with each of them potentially having a specialized function. Induces T-cell proliferation. This Homo sapiens (Human) protein is Myelin basic protein (MBP).